The sequence spans 121 residues: Structural protein p14.5 (121 aa).

Disordered regions lie at residues 1 to 24 (MADFNSPIQYLKEDSRDRTSIGSL) and 84 to 121 (TSLVPEETDNKPEDDEESGAKPKKKKHLFPKLSSHKSK). Ala2 carries the post-translational modification N-acetylalanine; by host. The segment covering 104 to 121 (KPKKKKHLFPKLSSHKSK) has biased composition (basic residues).

It belongs to the asfivirus structural protein p14.5 family. In terms of assembly, interacts with the major capsid protein. Interacts with host IRF3; this interaction interferes with the recruitment of IRF3 to TBK1. Post-translationally, acetylated.

The protein resides in the virion. In terms of biological role, structural protein required for transport of intracellular particles from the assembly sites to the plasma membrane. Binds to both ssDNA and dsDNA. Suppressed the activation of the cGAS/STING pathway by interfering with the recruitment of IRF3 to TBK1, which in turn suppresses IRF3 phosphorylation, decreasing interferon production. The polypeptide is Structural protein p14.5 (Ornithodoros (relapsing fever ticks)).